A 373-amino-acid chain; its full sequence is Phosphoserine aminotransferase (373 aa).

Arg-47 serves as a coordination point for L-glutamate. Residues 81 to 82, Trp-113, Thr-164, Asp-185, and Gln-208 each bind pyridoxal 5'-phosphate; that span reads AR. Lys-209 is modified (N6-(pyridoxal phosphate)lysine). Residue 250-251 coordinates pyridoxal 5'-phosphate; the sequence is NT.

It belongs to the class-V pyridoxal-phosphate-dependent aminotransferase family. SerC subfamily. Homodimer. Pyridoxal 5'-phosphate is required as a cofactor.

It is found in the cytoplasm. It carries out the reaction O-phospho-L-serine + 2-oxoglutarate = 3-phosphooxypyruvate + L-glutamate. It catalyses the reaction 4-(phosphooxy)-L-threonine + 2-oxoglutarate = (R)-3-hydroxy-2-oxo-4-phosphooxybutanoate + L-glutamate. Its pathway is amino-acid biosynthesis; L-serine biosynthesis; L-serine from 3-phospho-D-glycerate: step 2/3. It participates in cofactor biosynthesis; pyridoxine 5'-phosphate biosynthesis; pyridoxine 5'-phosphate from D-erythrose 4-phosphate: step 3/5. Catalyzes the reversible conversion of 3-phosphohydroxypyruvate to phosphoserine and of 3-hydroxy-2-oxo-4-phosphonooxybutanoate to phosphohydroxythreonine. The protein is Phosphoserine aminotransferase of Buchnera aphidicola subsp. Baizongia pistaciae (strain Bp).